The following is a 686-amino-acid chain: X-linked interleukin-1 receptor accessory protein-like 2 (686 aa).

The signal sequence occupies residues 1–16 (MKPPFLLALVVCSVVS). The Extracellular portion of the chain corresponds to 17–354 (TNLKMVSKRN…LLRKKDLIYK (338 aa)). The Ig-like C2-type 1 domain maps to 18 to 132 (NLKMVSKRNS…YCMKVSMSLT (115 aa)). Cys53 and Cys116 are disulfide-bonded. Asn63, Asn120, Asn136, Asn211, and Asn328 each carry an N-linked (GlcNAc...) asparagine glycan. Ig-like C2-type domains lie at 141–232 (CYNS…LKVT) and 239–347 (PPKP…VLLR). 2 cysteine pairs are disulfide-bonded: Cys162-Cys214 and Cys265-Cys331. Residues 355 to 375 (IELAGGLGAIFLLLVLLVVIY) form a helical membrane-spanning segment. Residues 376 to 686 (KCYNIELMLF…KELSFTSDIW (311 aa)) lie on the Cytoplasmic side of the membrane. One can recognise a TIR domain in the interval 400 to 556 (KEYDAYLSYT…KFWKHLVYEM (157 aa)). The active site involves Glu488.

It belongs to the interleukin-1 receptor family. As to expression, detected at low levels in fetal and adult brain, in particular in the frontal lobe, temporal lobe and cerebellum. Detected at very low levels in skin, liver, fetal ovary and in placenta.

The protein localises to the membrane. The enzyme catalyses NAD(+) + H2O = ADP-D-ribose + nicotinamide + H(+). The protein is X-linked interleukin-1 receptor accessory protein-like 2 (IL1RAPL2) of Homo sapiens (Human).